A 149-amino-acid chain; its full sequence is Transcriptional repressor NrdR (149 aa).

The segment at 3–34 is a zinc-finger region; sequence CPFCSAVDTKVIDSRLVAEGHQVRRRRECLLC. An ATP-cone domain is found at 49–139; the sequence is PRVIKSNGSR…VYRSFEDIRE (91 aa).

It belongs to the NrdR family. Zn(2+) is required as a cofactor.

Its function is as follows. Negatively regulates transcription of bacterial ribonucleotide reductase nrd genes and operons by binding to NrdR-boxes. This Aeromonas salmonicida (strain A449) protein is Transcriptional repressor NrdR.